We begin with the raw amino-acid sequence, 332 residues long: Holliday junction branch migration complex subunit RuvB (332 aa).

Positions 1-181 (MARILDNDVM…FGITGHMEYY (181 aa)) are large ATPase domain (RuvB-L). ATP-binding positions include leucine 20, arginine 21, glycine 62, lysine 65, threonine 66, threonine 67, 128-130 (EDF), arginine 171, tyrosine 181, and arginine 218. Threonine 66 is a binding site for Mg(2+). Positions 182–252 (QEKDLTEIVE…ITDRALTMLD (71 aa)) are small ATPAse domain (RuvB-S). The tract at residues 255 to 332 (REGLDYIDQK…RHLGYPYQNT (78 aa)) is head domain (RuvB-H). The DNA site is built by arginine 291, arginine 310, arginine 312, and arginine 315.

The protein belongs to the RuvB family. In terms of assembly, homohexamer. Forms an RuvA(8)-RuvB(12)-Holliday junction (HJ) complex. HJ DNA is sandwiched between 2 RuvA tetramers; dsDNA enters through RuvA and exits via RuvB. An RuvB hexamer assembles on each DNA strand where it exits the tetramer. Each RuvB hexamer is contacted by two RuvA subunits (via domain III) on 2 adjacent RuvB subunits; this complex drives branch migration. In the full resolvosome a probable DNA-RuvA(4)-RuvB(12)-RuvC(2) complex forms which resolves the HJ.

Its subcellular location is the cytoplasm. It catalyses the reaction ATP + H2O = ADP + phosphate + H(+). In terms of biological role, the RuvA-RuvB-RuvC complex processes Holliday junction (HJ) DNA during genetic recombination and DNA repair, while the RuvA-RuvB complex plays an important role in the rescue of blocked DNA replication forks via replication fork reversal (RFR). RuvA specifically binds to HJ cruciform DNA, conferring on it an open structure. The RuvB hexamer acts as an ATP-dependent pump, pulling dsDNA into and through the RuvAB complex. RuvB forms 2 homohexamers on either side of HJ DNA bound by 1 or 2 RuvA tetramers; 4 subunits per hexamer contact DNA at a time. Coordinated motions by a converter formed by DNA-disengaged RuvB subunits stimulates ATP hydrolysis and nucleotide exchange. Immobilization of the converter enables RuvB to convert the ATP-contained energy into a lever motion, pulling 2 nucleotides of DNA out of the RuvA tetramer per ATP hydrolyzed, thus driving DNA branch migration. The RuvB motors rotate together with the DNA substrate, which together with the progressing nucleotide cycle form the mechanistic basis for DNA recombination by continuous HJ branch migration. Branch migration allows RuvC to scan DNA until it finds its consensus sequence, where it cleaves and resolves cruciform DNA. The chain is Holliday junction branch migration complex subunit RuvB from Streptococcus pyogenes serotype M12 (strain MGAS9429).